We begin with the raw amino-acid sequence, 801 residues long: LPS-assembly protein LptD (801 aa).

The signal sequence occupies residues 1–23 (MARLFSLKPLVLALGFCFGTHCA).

It belongs to the LptD family. Component of the lipopolysaccharide transport and assembly complex. Interacts with LptE and LptA.

It is found in the cell outer membrane. Its function is as follows. Together with LptE, is involved in the assembly of lipopolysaccharide (LPS) at the surface of the outer membrane. The sequence is that of LPS-assembly protein LptD from Neisseria gonorrhoeae (strain ATCC 700825 / FA 1090).